A 635-amino-acid polypeptide reads, in one-letter code: Cilia- and flagella-associated protein 206 (635 aa).

Belongs to the CFAP206 family.

Its subcellular location is the cytoplasm. It is found in the cytoskeleton. The protein resides in the cilium axoneme. In terms of biological role, may regulate cilium motility through its role in the assembly of the axonemal RS2 radial spoke. In Tetrahymena thermophila (strain SB210), this protein is Cilia- and flagella-associated protein 206.